The primary structure comprises 428 residues: Enolase (428 aa).

Gln165 provides a ligand contact to (2R)-2-phosphoglycerate. Catalysis depends on Glu207, which acts as the Proton donor. 3 residues coordinate Mg(2+): Asp244, Glu285, and Asp312. (2R)-2-phosphoglycerate-binding residues include Lys337, Arg366, Ser367, and Lys388. Catalysis depends on Lys337, which acts as the Proton acceptor.

Belongs to the enolase family. In terms of assembly, component of the RNA degradosome, a multiprotein complex involved in RNA processing and mRNA degradation. Mg(2+) is required as a cofactor.

The protein localises to the cytoplasm. Its subcellular location is the secreted. It localises to the cell surface. The enzyme catalyses (2R)-2-phosphoglycerate = phosphoenolpyruvate + H2O. The protein operates within carbohydrate degradation; glycolysis; pyruvate from D-glyceraldehyde 3-phosphate: step 4/5. Catalyzes the reversible conversion of 2-phosphoglycerate (2-PG) into phosphoenolpyruvate (PEP). It is essential for the degradation of carbohydrates via glycolysis. The protein is Enolase of Coxiella burnetii (strain Dugway 5J108-111).